Here is a 130-residue protein sequence, read N- to C-terminus: Organic solute transporter subunit beta (130 aa).

Topologically, residues 1-35 (MNYSEKLTGAPPMTEVPLELLEEMLWFFRVEDATP) are extracellular. Residues 36 to 56 (WNCSMFVLAALVAIISFILLG) traverse the membrane as a helical segment. The Cytoplasmic segment spans residues 57 to 130 (RNIQANRNQK…HLPDPQEPES (74 aa)). Residues 99–130 (LSEKPTLAQGEMEAKCSDVPRVHLPDPQEPES) form a disordered region. Basic and acidic residues predominate over residues 110-124 (MEAKCSDVPRVHLPD).

It belongs to the OST-beta family. As to quaternary structure, interacts with SLC51A. The Ost-alpha/Ost-beta complex is a heterodimer composed of alpha (SLC51A) and beta (SLC51B) subunit; induces the transport of SLC51A from the endoplasmic reticulum to the plasma membrane.

It is found in the cell membrane. The enzyme catalyses taurocholate(out) = taurocholate(in). The catalysed reaction is estrone 3-sulfate(out) = estrone 3-sulfate(in). It carries out the reaction dehydroepiandrosterone 3-sulfate(out) = dehydroepiandrosterone 3-sulfate(in). It catalyses the reaction tauroursodeoxycholate(out) = tauroursodeoxycholate(in). The enzyme catalyses glycoursodeoxycholate(out) = glycoursodeoxycholate(in). The catalysed reaction is glycocholate(out) = glycocholate(in). It carries out the reaction taurochenodeoxycholate(out) = taurochenodeoxycholate(in). It catalyses the reaction glycochenodeoxycholate(out) = glycochenodeoxycholate(in). The enzyme catalyses taurodeoxycholate(out) = taurodeoxycholate(in). The catalysed reaction is glycodeoxycholate(out) = glycodeoxycholate(in). It carries out the reaction prostaglandin E2(out) = prostaglandin E2(in). Its function is as follows. Essential component of the Ost-alpha/Ost-beta complex, a heterodimer that acts as the intestinal basolateral transporter responsible for bile acid export from enterocytes into portal blood. The Ost-alpha/Ost-beta complex efficiently transports the major species of bile acids (taurocholate). Taurine conjugates are transported more efficiently across the basolateral membrane than glycine-conjugated bile acids. Can also transport steroids such as estrone 3-sulfate and dehydroepiandrosterone 3-sulfate, therefore playing a role in the enterohepatic circulation of sterols. Able to transport eicosanoids such as prostaglandin E2. Modulates SLC51A glycosylation, membrane trafficking and stability activities. In Bos taurus (Bovine), this protein is Organic solute transporter subunit beta (SLC51B).